The sequence spans 112 residues: Histone H3-4 (112 aa).

The disordered stretch occupies residues 1-31 (QTGAKAPRKALANKAARKTAPADGGVKKPHR).

Belongs to the histone H3 family. The nucleosome is a histone octamer containing two molecules each of H2A, H2B, H3 and H4 assembled in one H3-H4 heterotetramer and two H2A-H2B heterodimers. The octamer wraps approximately 147 bp of DNA.

Its subcellular location is the nucleus. It is found in the chromosome. In terms of biological role, core component of nucleosome. Nucleosomes wrap and compact DNA into chromatin, limiting DNA accessibility to the cellular machineries which require DNA as a template. Histones thereby play a central role in transcription regulation, DNA repair, DNA replication and chromosomal stability. DNA accessibility is regulated via a complex set of post-translational modifications of histones, also called histone code, and nucleosome remodeling. This chain is Histone H3-4 (H3-4), found in Stylonychia lemnae (Ciliate).